We begin with the raw amino-acid sequence, 243 residues long: MKNILSWMLMFAVALPILGCDNNGGSQTSAMGKDMVEDSVLTDNQKLSRTFGHLLARQLSSTEDFTLDLTEVIKGMQSEIEGKSAPLTDSEYETQMALVQKASFEKKCSENLASAEKFLKENKDKEGVIELEPNKLQYRIVKEGTGRVLTGKPNALLHYTGSFINGKVFDTSEKNKDPILLPLTKVISGFSQGMQGMREGEVRVLYIHPDLAYGTSGQLPPNSLLIFEVKLIEANDDNVSVAE.

Residues 1–14 (MKNILSWMLMFAVA) form the signal peptide. The PPIase FKBP-type domain occupies 152 to 235 (KPNALLHYTG…IFEVKLIEAN (84 aa)).

The protein belongs to the FKBP-type PPIase family.

It is found in the cell outer membrane. The enzyme catalyses [protein]-peptidylproline (omega=180) = [protein]-peptidylproline (omega=0). In terms of biological role, PPIases accelerate the folding of proteins. This chain is Peptidyl-prolyl cis-trans isomerase Mip (mip), found in Chlamydia muridarum (strain MoPn / Nigg).